The primary structure comprises 314 residues: MAKNNLTRVTEFILMGFMDHPKLEIPLFLVFLSFYLVTLLGNVGMIMLIQVDVKLYTPMYFFLSHLSLLDACYTSVITPQILATLATGKTVISYGHCAAQFFLFTICAGTECFLLAVMAYDRYAAIRNPLLYTVAMNPRLCWSLVVGAYVCGVSGAILRTTCTFTLSFCKDNQINFFFCDLPPLLKLACSDTANIEIVIIFFGNFVILANASVILISYLLIIKTILKVKSSGGRAKTFSTCASHITAVALFFGALIFMYLQSGSGKSLEEDKVVSVFYTVVIPMLNPLIYSLRNKDVKDAFRKVARRLQVSLSM.

Topologically, residues 1 to 25 (MAKNNLTRVTEFILMGFMDHPKLEI) are extracellular. N5 carries an N-linked (GlcNAc...) asparagine glycan. The chain crosses the membrane as a helical span at residues 26–46 (PLFLVFLSFYLVTLLGNVGMI). Residues 47 to 54 (MLIQVDVK) are Cytoplasmic-facing. The helical transmembrane segment at 55–75 (LYTPMYFFLSHLSLLDACYTS) threads the bilayer. Over 76–99 (VITPQILATLATGKTVISYGHCAA) the chain is Extracellular. Residues C97 and C189 are joined by a disulfide bond. A helical transmembrane segment spans residues 100-120 (QFFLFTICAGTECFLLAVMAY). Residues 121 to 139 (DRYAAIRNPLLYTVAMNPR) lie on the Cytoplasmic side of the membrane. The chain crosses the membrane as a helical span at residues 140-160 (LCWSLVVGAYVCGVSGAILRT). The Extracellular portion of the chain corresponds to 161 to 197 (TCTFTLSFCKDNQINFFFCDLPPLLKLACSDTANIEI). A helical membrane pass occupies residues 198–217 (VIIFFGNFVILANASVILIS). Residues 218–237 (YLLIIKTILKVKSSGGRAKT) lie on the Cytoplasmic side of the membrane. The helical transmembrane segment at 238-258 (FSTCASHITAVALFFGALIFM) threads the bilayer. At 259–271 (YLQSGSGKSLEED) the chain is on the extracellular side. The chain crosses the membrane as a helical span at residues 272–292 (KVVSVFYTVVIPMLNPLIYSL). Over 293 to 314 (RNKDVKDAFRKVARRLQVSLSM) the chain is Cytoplasmic.

This sequence belongs to the G-protein coupled receptor 1 family.

It localises to the cell membrane. Its function is as follows. Odorant receptor. The protein is Olfactory receptor 9I1 (OR9I1) of Homo sapiens (Human).